The sequence spans 151 residues: SsrA-binding protein (151 aa).

The protein belongs to the SmpB family.

The protein resides in the cytoplasm. Its function is as follows. Required for rescue of stalled ribosomes mediated by trans-translation. Binds to transfer-messenger RNA (tmRNA), required for stable association of tmRNA with ribosomes. tmRNA and SmpB together mimic tRNA shape, replacing the anticodon stem-loop with SmpB. tmRNA is encoded by the ssrA gene; the 2 termini fold to resemble tRNA(Ala) and it encodes a 'tag peptide', a short internal open reading frame. During trans-translation Ala-aminoacylated tmRNA acts like a tRNA, entering the A-site of stalled ribosomes, displacing the stalled mRNA. The ribosome then switches to translate the ORF on the tmRNA; the nascent peptide is terminated with the 'tag peptide' encoded by the tmRNA and targeted for degradation. The ribosome is freed to recommence translation, which seems to be the essential function of trans-translation. This Flavobacterium johnsoniae (strain ATCC 17061 / DSM 2064 / JCM 8514 / BCRC 14874 / CCUG 350202 / NBRC 14942 / NCIMB 11054 / UW101) (Cytophaga johnsonae) protein is SsrA-binding protein.